Reading from the N-terminus, the 180-residue chain is Inner membrane-spanning protein YciB (180 aa).

Transmembrane regions (helical) follow at residues phenylalanine 4–isoleucine 24, glutamine 25–isoleucine 45, valine 49–isoleucine 69, isoleucine 76–isoleucine 96, isoleucine 118–valine 138, and phenylalanine 150–leucine 170.

It belongs to the YciB family.

Its subcellular location is the cell inner membrane. Plays a role in cell envelope biogenesis, maintenance of cell envelope integrity and membrane homeostasis. The polypeptide is Inner membrane-spanning protein YciB (Rickettsia rickettsii (strain Iowa)).